The sequence spans 227 residues: 2,3-bisphosphoglycerate-dependent phosphoglycerate mutase (227 aa).

Residues 7–14 (RHGQSEWN), 20–21 (TG), Arg-59, 86–89 (ERHY), Lys-97, 113–114 (RR), and 182–183 (GN) contribute to the substrate site. His-8 (tele-phosphohistidine intermediate) is an active-site residue. Residue Glu-86 is the Proton donor/acceptor of the active site.

The protein belongs to the phosphoglycerate mutase family. BPG-dependent PGAM subfamily. As to quaternary structure, homodimer.

It catalyses the reaction (2R)-2-phosphoglycerate = (2R)-3-phosphoglycerate. It functions in the pathway carbohydrate degradation; glycolysis; pyruvate from D-glyceraldehyde 3-phosphate: step 3/5. Functionally, catalyzes the interconversion of 2-phosphoglycerate and 3-phosphoglycerate. The sequence is that of 2,3-bisphosphoglycerate-dependent phosphoglycerate mutase from Neisseria meningitidis serogroup C / serotype 2a (strain ATCC 700532 / DSM 15464 / FAM18).